Reading from the N-terminus, the 258-residue chain is DNA repair protein RecO (258 aa).

Belongs to the RecO family.

In terms of biological role, involved in DNA repair and RecF pathway recombination. The protein is DNA repair protein RecO of Syntrophotalea carbinolica (strain DSM 2380 / NBRC 103641 / GraBd1) (Pelobacter carbinolicus).